The primary structure comprises 479 residues: Gamma-aminobutyric acid receptor subunit rho-1 (479 aa).

Positions 1–21 (MLAVPNMRFGIFLLWWGWVLA) are cleaved as a signal peptide. The Extracellular segment spans residues 22-280 (TESRMHWPGR…LYINFTLRRH (259 aa)). A disordered region spans residues 32–55 (EVHEMSKKGRPQRQRREVHEDAHK). Basic and acidic residues predominate over residues 45 to 55 (QRREVHEDAHK). Arg125 lines the 4-aminobutanoate pocket. N-linked (GlcNAc...) asparagine glycosylation occurs at Asn140. Position 189 (Ser189) interacts with 4-aminobutanoate. Cysteines 198 and 212 form a disulfide. Glu217 contacts 4-aminobutanoate. N-linked (GlcNAc...) asparagine glycans are attached at residues Asn234 and Asn274. A helical transmembrane segment spans residues 281 to 301 (IFFFLLQTYFPATLMVMLSWV). The Cytoplasmic portion of the chain corresponds to 302-313 (SFWIDRRAVPAR). A helical membrane pass occupies residues 314-334 (VPLGITTVLTMSTIITGVNAS). Over 335–345 (MPRVSYIKAVD) the chain is Extracellular. Residues 346 to 366 (IYLWVSFVFVFLSVLEYAAVN) form a helical membrane-spanning segment. Over 367-457 (YLTTVQERKE…MRIDTHAIDK (91 aa)) the chain is Cytoplasmic. A helical transmembrane segment spans residues 458–478 (YSRIIFPAAYILFNLIYWSIF). Ser479 is a topological domain (extracellular).

The protein belongs to the ligand-gated ion channel (TC 1.A.9) family. Gamma-aminobutyric acid receptor (TC 1.A.9.5) subfamily. GABRR1 sub-subfamily. Three rho subunits (rho-1/GBRR1, rho-2/GBRR2 and rho-3/GBRR3) coassemble either to form functional homopentamers or heteropentamers. Rho-1/GBRR1 subunits can also associate with alpha-1/GBRA1 subunits to form a functional GABAAR. Interacts with SQSTM1. As to expression, highly expressed in the retina. Expressed in a lesser extent in brain, lung and thymus.

It localises to the postsynaptic cell membrane. Its subcellular location is the cell membrane. It carries out the reaction chloride(in) = chloride(out). With respect to regulation, inhibited by TPMPA, a rho-specific antagonist, when forming a homopentamer. In contrast with other GABAARs, rho-1 GABAAR is not inhibited by bicuculline, when forming a homopentamer. Functionally, rho subunit of the pentameric ligand-gated chloride channels responsible for mediating the effects of gamma-aminobutyric acid (GABA), the major inhibitory neurotransmitter in the brain. Rho-containing GABA-gated chloride channels are a subclass of GABA(A) receptors (GABAARs) entirely composed of rho subunits, where GABA molecules bind at the rho intersubunit interfaces. When activated by GABA, rho-GABAARs selectively allow the flow of chloride anions across the cell membrane down their electrochemical gradient. Rho-1 subunits are primarily expressed in retina where rho-1-containing GABAARs may play a role in retinal neurotransmission. Rho-1 GABAARs are also involved in neuronal tonic (extrasynaptic) and phasic (synaptic) transmission in the Purkinje neurons of the cerebellum. Rho-1 GABAARs may also contribute to the regulation of glial development in the cerebellum by controlling extrasynaptic transmission. The polypeptide is Gamma-aminobutyric acid receptor subunit rho-1 (Homo sapiens (Human)).